The following is a 447-amino-acid chain: Cysteine--tRNA ligase (447 aa).

Residue Cys28 coordinates Zn(2+). Residues 30-40 (PTVYNYIHIGN) carry the 'HIGH' region motif. Residues Cys211, His236, and Glu240 each coordinate Zn(2+). Residues 268–272 (KMSKS) carry the 'KMSKS' region motif. Lys271 lines the ATP pocket.

Belongs to the class-I aminoacyl-tRNA synthetase family. In terms of assembly, monomer. It depends on Zn(2+) as a cofactor.

The protein resides in the cytoplasm. The catalysed reaction is tRNA(Cys) + L-cysteine + ATP = L-cysteinyl-tRNA(Cys) + AMP + diphosphate. The protein is Cysteine--tRNA ligase of Streptococcus pyogenes serotype M3 (strain ATCC BAA-595 / MGAS315).